The following is a 261-amino-acid chain: Probable 6-phosphogluconolactonase 4 (261 aa).

The protein belongs to the glucosamine/galactosamine-6-phosphate isomerase family. 6-phosphogluconolactonase subfamily.

The protein resides in the cytoplasm. The protein localises to the cytosol. The catalysed reaction is 6-phospho-D-glucono-1,5-lactone + H2O = 6-phospho-D-gluconate + H(+). It participates in carbohydrate degradation; pentose phosphate pathway; D-ribulose 5-phosphate from D-glucose 6-phosphate (oxidative stage): step 2/3. In terms of biological role, catalyzes the hydrolysis of 6-phosphogluconolactone to 6-phosphogluconate. The sequence is that of Probable 6-phosphogluconolactonase 4 from Arabidopsis thaliana (Mouse-ear cress).